Reading from the N-terminus, the 270-residue chain is 4-hydroxy-tetrahydrodipicolinate reductase (270 aa).

NAD(+) contacts are provided by residues 8 to 13 (GALGRM), aspartate 34, 102 to 104 (GTT), and 128 to 131 (SQNY). Catalysis depends on histidine 160, which acts as the Proton donor/acceptor. Residue histidine 161 participates in (S)-2,3,4,5-tetrahydrodipicolinate binding. Lysine 164 (proton donor) is an active-site residue. A (S)-2,3,4,5-tetrahydrodipicolinate-binding site is contributed by 170 to 171 (GT).

This sequence belongs to the DapB family.

Its subcellular location is the cytoplasm. The catalysed reaction is (S)-2,3,4,5-tetrahydrodipicolinate + NAD(+) + H2O = (2S,4S)-4-hydroxy-2,3,4,5-tetrahydrodipicolinate + NADH + H(+). It carries out the reaction (S)-2,3,4,5-tetrahydrodipicolinate + NADP(+) + H2O = (2S,4S)-4-hydroxy-2,3,4,5-tetrahydrodipicolinate + NADPH + H(+). It functions in the pathway amino-acid biosynthesis; L-lysine biosynthesis via DAP pathway; (S)-tetrahydrodipicolinate from L-aspartate: step 4/4. In terms of biological role, catalyzes the conversion of 4-hydroxy-tetrahydrodipicolinate (HTPA) to tetrahydrodipicolinate. This chain is 4-hydroxy-tetrahydrodipicolinate reductase, found in Methanococcus maripaludis (strain C6 / ATCC BAA-1332).